We begin with the raw amino-acid sequence, 507 residues long: Cobyric acid synthase (507 aa).

The 196-residue stretch at 273–468 (RPVIAVIAYP…LHGMFEDPAV (196 aa)) folds into the GATase cobBQ-type domain. Cys354 serves as the catalytic Nucleophile. Residue His460 is part of the active site.

The protein belongs to the CobB/CobQ family. CobQ subfamily.

It participates in cofactor biosynthesis; adenosylcobalamin biosynthesis. Its function is as follows. Catalyzes amidations at positions B, D, E, and G on adenosylcobyrinic A,C-diamide. NH(2) groups are provided by glutamine, and one molecule of ATP is hydrogenolyzed for each amidation. The sequence is that of Cobyric acid synthase from Polaromonas sp. (strain JS666 / ATCC BAA-500).